We begin with the raw amino-acid sequence, 459 residues long: Exodeoxyribonuclease 7 large subunit (459 aa).

It belongs to the XseA family. Heterooligomer composed of large and small subunits.

The protein resides in the cytoplasm. The enzyme catalyses Exonucleolytic cleavage in either 5'- to 3'- or 3'- to 5'-direction to yield nucleoside 5'-phosphates.. In terms of biological role, bidirectionally degrades single-stranded DNA into large acid-insoluble oligonucleotides, which are then degraded further into small acid-soluble oligonucleotides. The protein is Exodeoxyribonuclease 7 large subunit of Pseudomonas aeruginosa (strain LESB58).